We begin with the raw amino-acid sequence, 240 residues long: uncharacterized protein (240 aa).

Positions 26–52 (DYVDDGESLPTRQSVKNQREQKKKQGK) are disordered. The helical transmembrane segment at 57 to 77 (LFTVLAVIFVFVPVIVLVTLF) threads the bilayer. The interval 100–185 (KYEVVPKSED…QPAEPVQNVP (86 aa)) is disordered. The segment covering 103–159 (VVPKSEDKNDTADTKETALQKESKKEPEDSKPKEQTAADKKQTAVAEKEDSPNKEEA) has biased composition (basic and acidic residues). A compositionally biased stretch (low complexity) spans 160 to 185 (TAAAASSSQSTVQQQEQPAEPVQNVP). In terms of domain architecture, LysM spans 189–235 (VKHTVQKKETLYRISMKYYKSRTGEEKIRAYNHLNGNDVYTGQVLDI).

The protein resides in the membrane. This is an uncharacterized protein from Bacillus subtilis (strain 168).